Here is a 278-residue protein sequence, read N- to C-terminus: Pantothenate synthetase (278 aa).

Residue 26-33 (MGNLHEGH) participates in ATP binding. The active-site Proton donor is the histidine 33. Glutamine 57 is a binding site for (R)-pantoate. Glutamine 57 contributes to the beta-alanine binding site. 144-147 (GKKD) serves as a coordination point for ATP. (R)-pantoate is bound at residue glutamine 150. ATP is bound by residues glycine 173 and 181–184 (LSSR).

The protein belongs to the pantothenate synthetase family. Homodimer.

The protein localises to the cytoplasm. It catalyses the reaction (R)-pantoate + beta-alanine + ATP = (R)-pantothenate + AMP + diphosphate + H(+). It participates in cofactor biosynthesis; (R)-pantothenate biosynthesis; (R)-pantothenate from (R)-pantoate and beta-alanine: step 1/1. In terms of biological role, catalyzes the condensation of pantoate with beta-alanine in an ATP-dependent reaction via a pantoyl-adenylate intermediate. This is Pantothenate synthetase from Neisseria meningitidis serogroup C / serotype 2a (strain ATCC 700532 / DSM 15464 / FAM18).